We begin with the raw amino-acid sequence, 167 residues long: NAD(P)H-quinone oxidoreductase subunit J (167 aa).

Belongs to the complex I 30 kDa subunit family. In terms of assembly, NDH-1 can be composed of about 15 different subunits; different subcomplexes with different compositions have been identified which probably have different functions.

The protein resides in the cellular thylakoid membrane. The enzyme catalyses a plastoquinone + NADH + (n+1) H(+)(in) = a plastoquinol + NAD(+) + n H(+)(out). The catalysed reaction is a plastoquinone + NADPH + (n+1) H(+)(in) = a plastoquinol + NADP(+) + n H(+)(out). Functionally, NDH-1 shuttles electrons from an unknown electron donor, via FMN and iron-sulfur (Fe-S) centers, to quinones in the respiratory and/or the photosynthetic chain. The immediate electron acceptor for the enzyme in this species is believed to be plastoquinone. Couples the redox reaction to proton translocation, and thus conserves the redox energy in a proton gradient. Cyanobacterial NDH-1 also plays a role in inorganic carbon-concentration. This is NAD(P)H-quinone oxidoreductase subunit J from Trichodesmium erythraeum (strain IMS101).